A 361-amino-acid chain; its full sequence is tRNA-specific 2-thiouridylase MnmA (361 aa).

ATP is bound by residues 8–15 (GMSGGVDS) and Met34. Residues 94–96 (NPD) are interaction with target base in tRNA. The active-site Nucleophile is Cys99. A disulfide bond links Cys99 and Cys195. Gly123 provides a ligand contact to ATP. The interval 145-147 (KDQ) is interaction with tRNA. Catalysis depends on Cys195, which acts as the Cysteine persulfide intermediate. Positions 307–308 (RY) are interaction with tRNA.

This sequence belongs to the MnmA/TRMU family.

It localises to the cytoplasm. It catalyses the reaction S-sulfanyl-L-cysteinyl-[protein] + uridine(34) in tRNA + AH2 + ATP = 2-thiouridine(34) in tRNA + L-cysteinyl-[protein] + A + AMP + diphosphate + H(+). In terms of biological role, catalyzes the 2-thiolation of uridine at the wobble position (U34) of tRNA, leading to the formation of s(2)U34. This chain is tRNA-specific 2-thiouridylase MnmA, found in Legionella pneumophila subsp. pneumophila (strain Philadelphia 1 / ATCC 33152 / DSM 7513).